Reading from the N-terminus, the 788-residue chain is Integrin beta-6 (788 aa).

The N-terminal stretch at 1–21 is a signal peptide; the sequence is MGIELLCLFFLFLGRNDHVQG. The PSI domain occupies 22-71; that stretch reads GCALGGAETCEDCLLIGPQCAWCAQENFTHPSGVGERCDTPANLLAKGCQ. The Extracellular segment spans residues 22-709; it reads GCALGGAETC…KDCPKPPNIP (688 aa). Disulfide bonds link cysteine 23–cysteine 41, cysteine 31–cysteine 454, cysteine 34–cysteine 59, cysteine 44–cysteine 70, cysteine 197–cysteine 204, cysteine 252–cysteine 293, cysteine 394–cysteine 406, cysteine 426–cysteine 452, cysteine 456–cysteine 476, cysteine 467–cysteine 479, cysteine 481–cysteine 490, cysteine 492–cysteine 519, cysteine 502–cysteine 517, cysteine 511–cysteine 522, cysteine 524–cysteine 537, cysteine 539–cysteine 560, cysteine 544–cysteine 558, cysteine 552–cysteine 563, and cysteine 565–cysteine 574. N-linked (GlcNAc...) asparagine glycans are attached at residues asparagine 48 and asparagine 97. The region spanning 131–371 is the VWFA domain; that stretch reads YPVDLYYLMD…QLIISAYEEL (241 aa). Positions 140, 142, and 144 each coordinate Mg(2+). Positions 144, 147, 148, and 179 each coordinate Ca(2+). Asparagine 235, aspartate 237, proline 239, and glutamate 240 together coordinate Ca(2+). Position 240 (glutamate 240) interacts with Mg(2+). N-linked (GlcNAc...) asparagine glycosylation is present at asparagine 260. The Ca(2+) site is built by aspartate 271 and lysine 355. N-linked (GlcNAc...) asparagine glycans are attached at residues asparagine 387 and asparagine 396. I-EGF domains lie at 456-491, 492-538, 539-575, and 576-615; these read CQKEVEVNSSKCHHGNGSFQCGVCACHPGHMGPRCE, CGED…PYCQ, CDNFSCVRHKGLLCGGNGDCDCGECVCRSGWTGEYCN, and CTTSTDSCVSEDGVLCSGRGDCVCGKCVCTNPGASGPTCE. Asparagine 463 and asparagine 471 each carry an N-linked (GlcNAc...) asparagine glycan. Asparagine 541 carries N-linked (GlcNAc...) asparagine glycosylation. Asparagine 575 carries N-linked (GlcNAc...) asparagine glycosylation. Disulfide bonds link cysteine 576/cysteine 599, cysteine 583/cysteine 597, cysteine 591/cysteine 602, cysteine 604/cysteine 614, cysteine 617/cysteine 620, cysteine 624/cysteine 670, cysteine 630/cysteine 649, cysteine 633/cysteine 645, and cysteine 678/cysteine 702. Residues 710 to 730 traverse the membrane as a helical segment; sequence MIMLGVSLAILLIGVVLLCIW. Residues 731–758 form an interaction with HAX1 region; the sequence is KLLVSFHDRKEVAKFEAERSKAKWQTGT. The Cytoplasmic portion of the chain corresponds to 731–788; the sequence is KLLVSFHDRKEVAKFEAERSKAKWQTGTNPLYRGSTSTFKNVTYKHREKQKVDLSTDC.

The protein belongs to the integrin beta chain family. Heterodimer of an alpha and a beta subunit. Interacts with FLNB. Interacts with HAX1. ITGAV:ITGB6 interacts with FBN1. ITGAV:ITGB6 interacts with TGFB1. As to quaternary structure, (Microbial infection) Integrin ITGAV:ITGB6 interacts with coxsackievirus A9, coxsackievirus B1 capsid proteins. In terms of assembly, (Microbial infection) Integrin ITGAV:ITGB6 interacts with herpes simplex virus-1/HHV-1 gH:gL proteins.

It localises to the cell membrane. It is found in the cell junction. The protein localises to the focal adhesion. Its function is as follows. Integrin alpha-V:beta-6 (ITGAV:ITGB6) is a receptor for fibronectin and cytotactin. It recognizes the sequence R-G-D in its ligands. Internalization of integrin alpha-V/beta-6 via clathrin-mediated endocytosis promotes carcinoma cell invasion. ITGAV:ITGB6 acts as a receptor for fibrillin-1 (FBN1) and mediates R-G-D-dependent cell adhesion to FBN1. Integrin alpha-V:beta-6 (ITGAV:ITGB6) mediates R-G-D-dependent release of transforming growth factor beta-1 (TGF-beta-1) from regulatory Latency-associated peptide (LAP), thereby playing a key role in TGF-beta-1 activation. Functionally, (Microbial infection) Integrin ITGAV:ITGB6 acts as a receptor for Coxsackievirus A9 and Coxsackievirus B1. In terms of biological role, (Microbial infection) Integrin ITGAV:ITGB6 acts as a receptor for Herpes simplex virus-1/HHV-1. The polypeptide is Integrin beta-6 (ITGB6) (Homo sapiens (Human)).